The chain runs to 510 residues: Protein HGV2 (510 aa).

A disordered region spans residues 95–227 (GVPEEDADGD…KENESEEDPD (133 aa)). A compositionally biased stretch (acidic residues) spans 98–110 (EEDADGDSDQEQE). Composition is skewed to basic and acidic residues over residues 111–129 (QFEKPDLPETEREKLREEV) and 142–199 (EERG…DKPV). The span at 204–217 (TEEPGTSGTSASSS) shows a compositional bias: low complexity. TPR repeat units lie at residues 260-293 (AQCHLKLGELGLEVENHPQAIGDFLECLVIQKDL) and 302-335 (AETYYNLGLAYSFEKRYDNALEHYQSALDVLEAR). The segment at 391–510 (DGSPFRQASE…TPKKDAAKRR (120 aa)) is disordered. The segment covering 398 to 411 (ASEGESSSGLGAST) has biased composition (low complexity). 2 short sequence motifs (nuclear localization signal) span residues 444 to 451 (VRRKRPSP) and 465 to 471 (SKKAKQE). Positions 459–471 (ESKENESKKAKQE) are enriched in basic and acidic residues.

The protein belongs to the NASP family. In terms of tissue distribution, embryo and larvae.

Its subcellular location is the nucleus. Functionally, may function as a nucleosome assembly factor during rapid embryonic cell divisions. The protein is Protein HGV2 (HGV2) of Halocynthia roretzi (Sea squirt).